Here is a 622-residue protein sequence, read N- to C-terminus: TAF6-like RNA polymerase II p300/CBP-associated factor-associated factor 65 kDa subunit 6L (622 aa).

2 disordered regions span residues 403–430 (QESS…GPED) and 457–546 (GTGQ…TRDV). 2 positions are modified to phosphoserine: Ser-495 and Ser-501. Low complexity predominate over residues 511–522 (ASASGPAASESR). 3 positions are modified to asymmetric dimethylarginine: Arg-555, Arg-561, and Arg-593.

The protein belongs to the TAF6 family. The PCAF complex is composed of a number of TBP-associated factors (TAFS), such as TAF5, TAF5L, TAF6, TAF6L, TAF9, TAF10 and TAF12, PCAF, and also PCAF-associated factors (PAFs), such as TADA2L/ADA2, TADA3L/ADA3 and SPT3. Component of the STAGA transcription coactivator-HAT complex, at least composed of SUPT3H, GCN5L2, TAF5L, TAF6L, SUPT7L, TADA3L, TAD1L, TAF10, TAF12, TRRAP and TAF9.

It is found in the nucleus. Functionally, functions as a component of the PCAF complex. The PCAF complex is capable of efficiently acetylating histones in a nucleosomal context. The PCAF complex could be considered as the human version of the yeast SAGA complex. With TAF5L, acts as an epigenetic regulator essential for somatic reprogramming. Regulates target genes through H3K9ac deposition and MYC recruitment which trigger MYC regulatory network to orchestrate gene expression programs to control embryonic stem cell state. Functions with MYC to activate target gene expression through RNA polymerase II pause release. The protein is TAF6-like RNA polymerase II p300/CBP-associated factor-associated factor 65 kDa subunit 6L of Homo sapiens (Human).